A 103-amino-acid polypeptide reads, in one-letter code: Large ribosomal subunit protein bL21 (103 aa).

The protein belongs to the bacterial ribosomal protein bL21 family. In terms of assembly, part of the 50S ribosomal subunit. Contacts protein L20.

Its function is as follows. This protein binds to 23S rRNA in the presence of protein L20. The protein is Large ribosomal subunit protein bL21 of Caldicellulosiruptor saccharolyticus (strain ATCC 43494 / DSM 8903 / Tp8T 6331).